The chain runs to 443 residues: ATP-dependent protease ATPase subunit HslU (443 aa).

ATP-binding positions include I18, 60–65, D256, E321, and R393; that span reads GVGKTE.

This sequence belongs to the ClpX chaperone family. HslU subfamily. A double ring-shaped homohexamer of HslV is capped on each side by a ring-shaped HslU homohexamer. The assembly of the HslU/HslV complex is dependent on binding of ATP.

It localises to the cytoplasm. Functionally, ATPase subunit of a proteasome-like degradation complex; this subunit has chaperone activity. The binding of ATP and its subsequent hydrolysis by HslU are essential for unfolding of protein substrates subsequently hydrolyzed by HslV. HslU recognizes the N-terminal part of its protein substrates and unfolds these before they are guided to HslV for hydrolysis. In Salmonella agona (strain SL483), this protein is ATP-dependent protease ATPase subunit HslU.